Consider the following 1561-residue polypeptide: Adhesion G protein-coupled receptor B2 (1561 aa).

Residues 1–20 (MTPACPLLLSVILSLRLATA) form the signal peptide. The Extracellular portion of the chain corresponds to 21 to 930 (FDPAPSACSA…ELAGAPSVPL (910 aa)). N-linked (GlcNAc...) asparagine glycans are attached at residues Asn-94, Asn-182, and Asn-183. O-linked (Xyl...) (chondroitin sulfate) serine glycosylation is present at Ser-257. 4 TSP type-1 domains span residues 300–353 (DPAA…ATCP), 355–408 (HGVW…AACP), 410–463 (EGQW…LDCP), and 466–519 (DGKW…KRCP). Intrachain disulfides connect Cys-312–Cys-346, Cys-316–Cys-352, Cys-327–Cys-336, Cys-367–Cys-402, Cys-371–Cys-407, Cys-382–Cys-392, Cys-422–Cys-457, Cys-426–Cys-462, Cys-437–Cys-447, Cys-478–Cys-513, Cys-482–Cys-518, Cys-493–Cys-503, Cys-525–Cys-560, and Cys-548–Cys-578. The N-linked (GlcNAc...) asparagine glycan is linked to Asn-347. Asn-428 carries N-linked (GlcNAc...) asparagine glycosylation. N-linked (GlcNAc...) asparagine glycosylation is found at Asn-551 and Asn-636. The GAIN-B domain maps to 748–918 (DRLFLPKEVL…AVLAQPPKDL (171 aa)). The segment at 757–797 (LSLSSPGKPATPGAATAGSPGRGRGPGTVPPGPGHAHQRLL) is disordered. Low complexity predominate over residues 760–775 (SSPGKPATPGAATAGS). Asn-861 carries an N-linked (GlcNAc...) asparagine glycan. Intrachain disulfides connect Cys-868/Cys-900 and Cys-888/Cys-902. The GPS stretch occupies residues 868 to 918 (CASWDYSRADTNSGDWNTESCQTLETQAAHTRCQCQHLSTFAVLAQPPKDL). Residues 931–951 (VIGCAVSCMALLTLLAIYAAF) form a helical membrane-spanning segment. The Cytoplasmic segment spans residues 952–959 (WRFIKSER). Residues 960–980 (SIILLNFCLSILASNILILVG) traverse the membrane as a helical segment. Residues 981-988 (QSRVLSKG) are Extracellular-facing. A helical transmembrane segment spans residues 989-1009 (VCTMTAAFLHFFFLSSFCWVL). The Cytoplasmic segment spans residues 1010 to 1030 (TEAWQSYLAVIGRMRTRLVRK). The helical transmembrane segment at 1031-1051 (RFLCLGWGLPALVVAVSVGFT) threads the bilayer. At 1052–1072 (RTKGYGTSSYCWLSLEGGLLY) the chain is on the extracellular side. A helical membrane pass occupies residues 1073–1093 (AFVGPAAVIVLVNMLIGIIVF). The Cytoplasmic segment spans residues 1094 to 1115 (NKLMARDGVSDKSKKQRAGSER). The helical transmembrane segment at 1116 to 1136 (CPWASLLLPCSACGAVPSPLL) threads the bilayer. Topologically, residues 1137–1147 (SSASARNAMAS) are extracellular. Residues 1148–1168 (LWSSCVVLPLLALTWMSAVLA) traverse the membrane as a helical segment. Over 1169 to 1561 (MTDRRSVLFQ…PPDGDFQTEV (393 aa)) the chain is Cytoplasmic. Position 1345 is a phosphotyrosine (Tyr-1345). Disordered stretches follow at residues 1355–1377 (LQPG…GTPR), 1417–1447 (FQPP…PGST), and 1491–1561 (RYRS…QTEV). Basic and acidic residues predominate over residues 1366–1376 (EAPRARPEGTP). The span at 1491-1502 (RYRSQSSAKEKP) shows a compositional bias: basic and acidic residues. Residues 1519-1528 (SWSTFKSMTL) are compositionally biased toward polar residues. Acidic residues predominate over residues 1551–1561 (EPPDGDFQTEV).

This sequence belongs to the G-protein coupled receptor 2 family. Adhesion G-protein coupled receptor (ADGR) subfamily. As to quaternary structure, heterodimer of 2 chains generated by proteolytic processing; the large extracellular N-terminal fragment and the membrane-bound C-terminal fragment predominantly remain associated and non-covalently linked. Interacts with GABPB2. Interacts (via carboxy-terminus) with TAX1BP3. Interacts with GNAZ. Interacts with SH3GL2. In terms of processing, glycosylated. Post-translationally, autoproteolytically processed at the GPS region of the GAIN-B domain; this cleavage modulates receptor activity. Additionally, furin is involved in the cleavage at another site, in the middle of the extracellular domain, generating a soluble fragment. Specifically expressed in the brain. The peak level in the brain is observed 10 days after birth.

It is found in the cell membrane. It localises to the secreted. Its activity is regulated as follows. Receptor activity is regulated by proteolytic processing. The long N-terminal has a an inhibitory effect on the constitutive signaling activity. Removal of the N-terminal region induces an increase of the receptor activity. Its function is as follows. Orphan G-protein coupled receptor involved in cell adhesion and probably in cell-cell interactions. Activates NFAT-signaling pathway, a transcription factor, via the G-protein GNAZ. Involved in angiogenesis inhibition. This Mus musculus (Mouse) protein is Adhesion G protein-coupled receptor B2 (Adgrb2).